Reading from the N-terminus, the 275-residue chain is Formamidopyrimidine-DNA glycosylase (275 aa).

Proline 2 serves as the catalytic Schiff-base intermediate with DNA. Glutamate 3 serves as the catalytic Proton donor. The active-site Proton donor; for beta-elimination activity is the lysine 59. Histidine 92, arginine 111, and arginine 155 together coordinate DNA. The FPG-type zinc-finger motif lies at 240–274 (NVYGRAGKACPKCGTTIEKQVLGQRSSYYCPQCQR). Arginine 264 serves as the catalytic Proton donor; for delta-elimination activity.

It belongs to the FPG family. As to quaternary structure, monomer. Requires Zn(2+) as cofactor.

The enzyme catalyses Hydrolysis of DNA containing ring-opened 7-methylguanine residues, releasing 2,6-diamino-4-hydroxy-5-(N-methyl)formamidopyrimidine.. The catalysed reaction is 2'-deoxyribonucleotide-(2'-deoxyribose 5'-phosphate)-2'-deoxyribonucleotide-DNA = a 3'-end 2'-deoxyribonucleotide-(2,3-dehydro-2,3-deoxyribose 5'-phosphate)-DNA + a 5'-end 5'-phospho-2'-deoxyribonucleoside-DNA + H(+). Its function is as follows. Involved in base excision repair of DNA damaged by oxidation or by mutagenic agents. Acts as a DNA glycosylase that recognizes and removes damaged bases. Has a preference for oxidized purines, such as 7,8-dihydro-8-oxoguanine (8-oxoG). Has AP (apurinic/apyrimidinic) lyase activity and introduces nicks in the DNA strand. Cleaves the DNA backbone by beta-delta elimination to generate a single-strand break at the site of the removed base with both 3'- and 5'-phosphates. This chain is Formamidopyrimidine-DNA glycosylase, found in Magnetococcus marinus (strain ATCC BAA-1437 / JCM 17883 / MC-1).